A 243-amino-acid chain; its full sequence is tRNA (guanine-N(1)-)-methyltransferase (243 aa).

S-adenosyl-L-methionine contacts are provided by residues Gly111 and 131–136; that span reads IGDYVL.

The protein belongs to the RNA methyltransferase TrmD family. As to quaternary structure, homodimer.

It is found in the cytoplasm. The enzyme catalyses guanosine(37) in tRNA + S-adenosyl-L-methionine = N(1)-methylguanosine(37) in tRNA + S-adenosyl-L-homocysteine + H(+). In terms of biological role, specifically methylates guanosine-37 in various tRNAs. In Brevibacillus brevis (strain 47 / JCM 6285 / NBRC 100599), this protein is tRNA (guanine-N(1)-)-methyltransferase.